The sequence spans 134 residues: MCEFCVRQADDEDDGGAAASGRPNARTARYSRNYAGPFRKTPDRLLGMGLIRLYQLTLSGFVGNSCRHIPTCSEYGYEAIARHGLWAGGWMTLFRVARCGPGGTSGLDPVPEILSDGFRWWTPRRYLSLGRKRG.

It belongs to the UPF0161 family.

It is found in the cell inner membrane. Functionally, could be involved in insertion of integral membrane proteins into the membrane. The polypeptide is Putative membrane protein insertion efficiency factor (Rhizobium etli (strain ATCC 51251 / DSM 11541 / JCM 21823 / NBRC 15573 / CFN 42)).